Reading from the N-terminus, the 1131-residue chain is Phytochrome (1131 aa).

Residues 1–30 (MASNSRHTQSQSTGSNNRRSSTNTNTTTNK) form a disordered region. Residues 9–29 (QSQSTGSNNRRSSTNTNTTTN) are compositionally biased toward low complexity. Positions 227 to 406 (DVGLLCDTVV…ALGLQLNMEL (180 aa)) constitute a GAF domain. Position 332 (Cys332) interacts with phytochromobilin. 2 consecutive PAS domains span residues 621–692 (VASE…LRGE) and 755–826 (DYRS…TIVL). Residues 903–1123 (YIRQEIKNPL…LVNVEFPMAQ (221 aa)) enclose the Histidine kinase domain.

It belongs to the phytochrome family. Homodimer. Contains one covalently linked phytochromobilin chromophore.

In terms of biological role, regulatory photoreceptor which exists in two forms that are reversibly interconvertible by light: the Pr form that absorbs maximally in the red region of the spectrum and the Pfr form that absorbs maximally in the far-red region. Photoconversion of Pr to Pfr induces an array of morphogenic responses, whereas reconversion of Pfr to Pr cancels the induction of those responses. Pfr controls the expression of a number of nuclear genes including those encoding the small subunit of ribulose-bisphosphate carboxylase, chlorophyll A/B binding protein, protochlorophyllide reductase, rRNA, etc. It also controls the expression of its own gene(s) in a negative feedback fashion. This is Phytochrome from Pinus sylvestris (Scotch pine).